Consider the following 96-residue polypeptide: Muconolactone Delta-isomerase (96 aa).

Belongs to the muconolactone Delta-isomerase family. In terms of assembly, homodecamer.

The enzyme catalyses (S)-muconolactone = (4,5-dihydro-5-oxofuran-2-yl)-acetate. It functions in the pathway aromatic compound metabolism; beta-ketoadipate pathway; 5-oxo-4,5-dihydro-2-furylacetate from catechol: step 3/3. This chain is Muconolactone Delta-isomerase (catC), found in Pseudomonas aeruginosa (strain ATCC 15692 / DSM 22644 / CIP 104116 / JCM 14847 / LMG 12228 / 1C / PRS 101 / PAO1).